A 130-amino-acid chain; its full sequence is Aspartate 1-decarboxylase (130 aa).

Serine 25 (schiff-base intermediate with substrate; via pyruvic acid) is an active-site residue. Serine 25 carries the post-translational modification Pyruvic acid (Ser). Threonine 57 is a substrate binding site. The active-site Proton donor is tyrosine 58. 73 to 75 contributes to the substrate binding site; that stretch reads GAT.

Belongs to the PanD family. In terms of assembly, heterooctamer of four alpha and four beta subunits. Requires pyruvate as cofactor. In terms of processing, is synthesized initially as an inactive proenzyme, which is activated by self-cleavage at a specific serine bond to produce a beta-subunit with a hydroxyl group at its C-terminus and an alpha-subunit with a pyruvoyl group at its N-terminus.

It is found in the cytoplasm. The enzyme catalyses L-aspartate + H(+) = beta-alanine + CO2. It functions in the pathway cofactor biosynthesis; (R)-pantothenate biosynthesis; beta-alanine from L-aspartate: step 1/1. Functionally, catalyzes the pyruvoyl-dependent decarboxylation of aspartate to produce beta-alanine. This is Aspartate 1-decarboxylase from Lactiplantibacillus plantarum (strain ATCC BAA-793 / NCIMB 8826 / WCFS1) (Lactobacillus plantarum).